The primary structure comprises 523 residues: Maintenance of mitochondrial morphology protein 1 (523 aa).

The Lumenal segment spans residues Met1–Gly43. The chain crosses the membrane as a helical span at residues Leu44–Phe64. Residues Gly65–Thr523 are Cytoplasmic-facing. Disordered regions lie at residues Pro70–Thr118, Tyr128–His147, Thr295–Gly349, Arg420–Leu474, and Gly492–Thr523. 2 stretches are compositionally biased toward polar residues: residues Gly74–Ser96 and Ser105–Thr118. Residues Thr137–His147 are compositionally biased toward basic residues. Residues Gln151–Pro412 form the SMP-LTD domain. Residues Thr295–Glu312 are compositionally biased toward polar residues. Residues Gly449–Arg468 are compositionally biased toward gly residues.

The protein belongs to the MMM1 family. Homodimer. Component of the ER-mitochondria encounter structure (ERMES) or MDM complex, composed of MMM1, MDM10, MDM12 and MDM34. An MMM1 homodimer associates with one molecule of MDM12 on each side in a pairwise head-to-tail manner, and the SMP-LTD domains of MMM1 and MDM12 generate a continuous hydrophobic tunnel for phospholipid trafficking.

The protein resides in the endoplasmic reticulum membrane. In terms of biological role, component of the ERMES/MDM complex, which serves as a molecular tether to connect the endoplasmic reticulum (ER) and mitochondria. Components of this complex are involved in the control of mitochondrial shape and protein biogenesis, and function in nonvesicular lipid trafficking between the ER and mitochondria. The MDM12-MMM1 subcomplex functions in the major beta-barrel assembly pathway that is responsible for biogenesis of all outer membrane beta-barrel proteins, and acts in a late step after the SAM complex. The MDM10-MDM12-MMM1 subcomplex further acts in the TOM40-specific pathway after the action of the MDM12-MMM1 complex. Essential for establishing and maintaining the structure of mitochondria and maintenance of mtDNA nucleoids. This is Maintenance of mitochondrial morphology protein 1 from Paracoccidioides lutzii (strain ATCC MYA-826 / Pb01) (Paracoccidioides brasiliensis).